A 328-amino-acid polypeptide reads, in one-letter code: Ketol-acid reductoisomerase (NADP(+)) (328 aa).

Residues 1–181 enclose the KARI N-terminal Rossmann domain; the sequence is MKIYYENDID…GLARAGVLET (181 aa). Residues 24–27, R47, S52, and 82–85 each bind NADP(+); these read YGSQ and DEIQ. H107 is an active-site residue. An NADP(+)-binding site is contributed by G133. In terms of domain architecture, KARI C-terminal knotted spans 182 to 327; the sequence is TFREETETDL…SKLRKLCGLE (146 aa). The Mg(2+) site is built by D190, E194, E226, and E230. Substrate is bound at residue S251.

The protein belongs to the ketol-acid reductoisomerase family. Mg(2+) is required as a cofactor.

It carries out the reaction (2R)-2,3-dihydroxy-3-methylbutanoate + NADP(+) = (2S)-2-acetolactate + NADPH + H(+). It catalyses the reaction (2R,3R)-2,3-dihydroxy-3-methylpentanoate + NADP(+) = (S)-2-ethyl-2-hydroxy-3-oxobutanoate + NADPH + H(+). It functions in the pathway amino-acid biosynthesis; L-isoleucine biosynthesis; L-isoleucine from 2-oxobutanoate: step 2/4. It participates in amino-acid biosynthesis; L-valine biosynthesis; L-valine from pyruvate: step 2/4. In terms of biological role, involved in the biosynthesis of branched-chain amino acids (BCAA). Catalyzes an alkyl-migration followed by a ketol-acid reduction of (S)-2-acetolactate (S2AL) to yield (R)-2,3-dihydroxy-isovalerate. In the isomerase reaction, S2AL is rearranged via a Mg-dependent methyl migration to produce 3-hydroxy-3-methyl-2-ketobutyrate (HMKB). In the reductase reaction, this 2-ketoacid undergoes a metal-dependent reduction by NADPH to yield (R)-2,3-dihydroxy-isovalerate. The polypeptide is Ketol-acid reductoisomerase (NADP(+)) (Methanothermobacter thermautotrophicus (strain ATCC 29096 / DSM 1053 / JCM 10044 / NBRC 100330 / Delta H) (Methanobacterium thermoautotrophicum)).